We begin with the raw amino-acid sequence, 63 residues long: Protein BP4A (63 aa).

As to expression, pollen specific.

This is Protein BP4A (BP4A) from Brassica napus (Rape).